Reading from the N-terminus, the 267-residue chain is Regulatory protein RecX (267 aa).

This sequence belongs to the RecX family.

The protein localises to the cytoplasm. Its function is as follows. Modulates RecA activity. The sequence is that of Regulatory protein RecX from Staphylococcus haemolyticus (strain JCSC1435).